A 165-amino-acid chain; its full sequence is Cyclic pyranopterin monophosphate synthase (165 aa).

Substrate is bound by residues 76 to 78 and 114 to 115; these read LCH and ME. The active site involves D129.

Belongs to the MoaC family. In terms of assembly, homohexamer; trimer of dimers.

The enzyme catalyses (8S)-3',8-cyclo-7,8-dihydroguanosine 5'-triphosphate = cyclic pyranopterin phosphate + diphosphate. It participates in cofactor biosynthesis; molybdopterin biosynthesis. In terms of biological role, catalyzes the conversion of (8S)-3',8-cyclo-7,8-dihydroguanosine 5'-triphosphate to cyclic pyranopterin monophosphate (cPMP). This Brucella canis (strain ATCC 23365 / NCTC 10854 / RM-666) protein is Cyclic pyranopterin monophosphate synthase.